The chain runs to 117 residues: Large ribosomal subunit protein bL20c (117 aa).

Belongs to the bacterial ribosomal protein bL20 family.

It is found in the plastid. Its subcellular location is the chloroplast. Functionally, binds directly to 23S ribosomal RNA and is necessary for the in vitro assembly process of the 50S ribosomal subunit. It is not involved in the protein synthesizing functions of that subunit. This chain is Large ribosomal subunit protein bL20c, found in Lemna minor (Common duckweed).